We begin with the raw amino-acid sequence, 163 residues long: Cyclic pyranopterin monophosphate synthase (163 aa).

Substrate-binding positions include Leu-79–His-81 and Met-117–Glu-118. Asp-132 is an active-site residue.

The protein belongs to the MoaC family. As to quaternary structure, homohexamer; trimer of dimers.

It catalyses the reaction (8S)-3',8-cyclo-7,8-dihydroguanosine 5'-triphosphate = cyclic pyranopterin phosphate + diphosphate. Its pathway is cofactor biosynthesis; molybdopterin biosynthesis. Its function is as follows. Catalyzes the conversion of (8S)-3',8-cyclo-7,8-dihydroguanosine 5'-triphosphate to cyclic pyranopterin monophosphate (cPMP). The chain is Cyclic pyranopterin monophosphate synthase from Chloroflexus aurantiacus (strain ATCC 29366 / DSM 635 / J-10-fl).